The following is a 422-amino-acid chain: MDKFRVQGRTRLSGEVTISGAKNAALPILFAALLAEDPVELQNVPKLKDIDTTIKLLSQLGVKIERDAASGSVFVDASGVDEFCAPYDLVKTMRASIWALGPLVARFGKGQVSLPGGCAIGARPVDLHITGLEQLSAEIKLEEGYVKASVNGRLKAAHIVMDKVSVGATVTIMSAATLAEGTTVIENAAREPEIVDTANFLNTLGAKITGAGTDRITIEGVARLGGGVYRVLPDRIETGTFLVAAAISGGKVVCRQTRPDTLDAVLAKLREAGADIEVGDDWISLDMHGKRPKAVTLRTAPHPGFPTDMQAQFSLLNLVAEGTGVITETIFENRFMHVPELIRMGAHAEIESNTVICYGVEQLSGAQVMATDLRASASLVLAGCIADGVTIVDRIYHIDRGYEGIEDKLRALGAKIERVKGE.

22–23 (KN) contacts phosphoenolpyruvate. UDP-N-acetyl-alpha-D-glucosamine is bound at residue Arg94. Catalysis depends on Cys118, which acts as the Proton donor. 2-(S-cysteinyl)pyruvic acid O-phosphothioketal is present on Cys118. Residues 123–127 (RPVDL), 163–166 (KVSV), Asp308, and Ile330 contribute to the UDP-N-acetyl-alpha-D-glucosamine site.

The protein belongs to the EPSP synthase family. MurA subfamily.

The protein localises to the cytoplasm. It catalyses the reaction phosphoenolpyruvate + UDP-N-acetyl-alpha-D-glucosamine = UDP-N-acetyl-3-O-(1-carboxyvinyl)-alpha-D-glucosamine + phosphate. The protein operates within cell wall biogenesis; peptidoglycan biosynthesis. Functionally, cell wall formation. Adds enolpyruvyl to UDP-N-acetylglucosamine. This chain is UDP-N-acetylglucosamine 1-carboxyvinyltransferase, found in Yersinia enterocolitica serotype O:8 / biotype 1B (strain NCTC 13174 / 8081).